A 259-amino-acid chain; its full sequence is Undecaprenyl-diphosphatase 4 (259 aa).

Helical transmembrane passes span 1–21 (MNWLEAFILGIIQGLTEFLPI), 39–59 (AGLFLDTMLHIGTLLAVFIYY), 71–91 (FSKLMLLLIVGTIPAVVIGLL), 99–119 (ISKTGITIGWEFLVTGFFLYM), 133–153 (ITYKDAFIIGSFQAAAIFPAI), 173–193 (AAYFSFLLSTPAIVGAIILQF), 208–228 (SLIVGTLSAAFFGYIAVSWMI), and 239–259 (FAYYVWGLGIIIITLQYTHVF).

Belongs to the UppP family.

It is found in the cell membrane. It carries out the reaction di-trans,octa-cis-undecaprenyl diphosphate + H2O = di-trans,octa-cis-undecaprenyl phosphate + phosphate + H(+). Functionally, catalyzes the dephosphorylation of undecaprenyl diphosphate (UPP). Confers resistance to bacitracin. In Bacillus thuringiensis (strain Al Hakam), this protein is Undecaprenyl-diphosphatase 4.